Consider the following 372-residue polypeptide: tRNA-specific 2-thiouridylase MnmA (372 aa).

ATP-binding positions include Gly-9–Ser-16 and Met-35. The interaction with target base in tRNA stretch occupies residues Asn-95–Asp-97. Catalysis depends on Cys-100, which acts as the Nucleophile. Cysteines 100 and 198 form a disulfide. Gly-124 serves as a coordination point for ATP. Positions Lys-148 to Gln-150 are interaction with tRNA. Residue Cys-198 is the Cysteine persulfide intermediate of the active site. The tract at residues Arg-317–Tyr-318 is interaction with tRNA.

The protein belongs to the MnmA/TRMU family.

Its subcellular location is the cytoplasm. The enzyme catalyses S-sulfanyl-L-cysteinyl-[protein] + uridine(34) in tRNA + AH2 + ATP = 2-thiouridine(34) in tRNA + L-cysteinyl-[protein] + A + AMP + diphosphate + H(+). Catalyzes the 2-thiolation of uridine at the wobble position (U34) of tRNA, leading to the formation of s(2)U34. The protein is tRNA-specific 2-thiouridylase MnmA of Delftia acidovorans (strain DSM 14801 / SPH-1).